Reading from the N-terminus, the 54-residue chain is Preprotein translocase subunit SecG (54 aa).

The Cytoplasmic portion of the chain corresponds to 1–31 (MSSGQNSGGLMSSAGLVRYFDAEDRNSIRID). A helical membrane pass occupies residues 32 to 53 (PKTIVAFGVLFGVGVLVLNALA). Residue Ile54 is a topological domain, extracellular.

The protein belongs to the SEC61-beta family. Component of the protein translocase complex. Heterotrimer consisting of alpha (SecY), beta (SecG) and gamma (SecE) subunits. Can form oligomers of the heterotrimer.

Its subcellular location is the cell membrane. Involved in protein export. The function of the beta subunit is unknown, but it may be involved in stabilization of the trimeric complex. This Haloquadratum walsbyi (strain DSM 16790 / HBSQ001) protein is Preprotein translocase subunit SecG.